The primary structure comprises 267 residues: Putative transcription factor Ovo-like 1 (267 aa).

4 consecutive C2H2-type zinc fingers follow at residues 118 to 140 (FTCH…MKCH), 146 to 168 (HLCT…VRTH), 174 to 197 (YKCS…KKIH), and 213 to 236 (YVCE…KERH).

As to expression, expressed in skin, testis, kidney and weakly in lung. Not detected in heart, brain, spleen, liver and skeletal muscle.

The protein localises to the nucleus. Its function is as follows. Putative transcription factor. Involved in hair formation and spermatogenesis. May function in the differentiation and/or maintenance of the urogenital system. This Mus musculus (Mouse) protein is Putative transcription factor Ovo-like 1 (Ovol1).